The primary structure comprises 46 residues: U-limacoditoxin(6)-Dv61 (46 aa).

A signal peptide spans 1 to 19 (MSKLLVLLMTTALATLAQA).

It belongs to the limacoditoxin-6 family. Expressed by the venom secretory cell of the spine. The spine is a cuticular structure containing a single large nucleated venom-secreting cell at its base. It is an independent unit capable of producing, storing and injecting venom. On the back of D.vulnerans caterpillars, spines are grouped together by 50 to 100 to form scoli, of which there are eight in D.vulnerans.

The protein resides in the secreted. Its function is as follows. Probable toxin. Does not show insecticidal, antimicrobial and antiparasitic activities. Does not induce increase in intracellular calcium in mouse DRG neurons, suggesting that it does not induce pain. This Doratifera vulnerans (Mottled cup moth) protein is U-limacoditoxin(6)-Dv61.